The chain runs to 61 residues: Small ribosomal subunit protein uS14 (61 aa).

The span at 1 to 12 (MSESETTDEPDS) shows a compositional bias: acidic residues. Residues 1 to 25 (MSESETTDEPDSETASSERTGQLES) form a disordered region. 4 residues coordinate Zn(2+): Cys-26, Cys-29, Cys-44, and Cys-47.

Belongs to the universal ribosomal protein uS14 family. Zinc-binding uS14 subfamily. Part of the 30S ribosomal subunit. Zn(2+) is required as a cofactor.

Its function is as follows. Binds 16S rRNA, required for the assembly of 30S particles. The polypeptide is Small ribosomal subunit protein uS14 (Haloarcula marismortui (strain ATCC 43049 / DSM 3752 / JCM 8966 / VKM B-1809) (Halobacterium marismortui)).